Reading from the N-terminus, the 180-residue chain is Immediate early response gene 2 protein (180 aa).

The tract at residues 53–135 (MSEKSGQSVT…KRRSKTATDS (83 aa)) is disordered. Over residues 56–92 (KSGQSVTEECTSHTQEPMDTSSSTATPLRETSGQSSE) the composition is skewed to polar residues. A compositionally biased stretch (basic and acidic residues) spans 93–103 (DGQRSGLEGHP).

Belongs to the IER family. In terms of assembly, interacts with FIBPB.

Its subcellular location is the nucleus. The protein localises to the cytoplasm. In terms of biological role, DNA-binding protein that seems to act as a transcription factor. Mediates with FIBPB FGF-signaling in Kupffer's vesicle ciliogenesis and in the establishment of laterality in the embryo. The polypeptide is Immediate early response gene 2 protein (Danio rerio (Zebrafish)).